The following is a 164-amino-acid chain: Choriogonadotropin subunit beta (164 aa).

The first 20 residues, 1–20, serve as a signal peptide directing secretion; that stretch reads MEMLQGLLLCLLLSTGGAWA. 6 disulfide bridges follow: C29-C77, C43-C92, C46-C130, C54-C108, C58-C110, and C113-C120. A glycan (N-linked (GlcNAc...) asparagine) is linked at N50. The interval 135–164 is disordered; it reads FQDSSSKDPPRNLTSPSQLLEPADPPLVPQ. S140 carries an O-linked (GalNAc...) serine glycan. N146 is a glycosylation site (N-linked (GlcNAc...) asparagine). Residue S151 is glycosylated (O-linked (GalNAc...) serine).

It belongs to the glycoprotein hormones subunit beta family. In terms of assembly, heterodimer of a common alpha chain and a unique beta chain which confers biological specificity to thyrotropin, lutropin, follitropin and gonadotropin. In terms of tissue distribution, placenta.

The protein resides in the secreted. Functionally, stimulates the ovaries to synthesize the steroids that are essential for the maintenance of pregnancy. The chain is Choriogonadotropin subunit beta (CGB) from Callithrix jacchus (White-tufted-ear marmoset).